A 156-amino-acid chain; its full sequence is Phosphoribosyl-AMP cyclohydrolase (156 aa).

Aspartate 106 is a binding site for Mg(2+). Cysteine 107 serves as a coordination point for Zn(2+). Mg(2+) contacts are provided by aspartate 108 and aspartate 110. Positions 123 and 130 each coordinate Zn(2+).

This sequence belongs to the PRA-CH family. Homodimer. Mg(2+) serves as cofactor. Requires Zn(2+) as cofactor.

Its subcellular location is the cytoplasm. The enzyme catalyses 1-(5-phospho-beta-D-ribosyl)-5'-AMP + H2O = 1-(5-phospho-beta-D-ribosyl)-5-[(5-phospho-beta-D-ribosylamino)methylideneamino]imidazole-4-carboxamide. It participates in amino-acid biosynthesis; L-histidine biosynthesis; L-histidine from 5-phospho-alpha-D-ribose 1-diphosphate: step 3/9. In terms of biological role, catalyzes the hydrolysis of the adenine ring of phosphoribosyl-AMP. In Gluconobacter oxydans (strain 621H) (Gluconobacter suboxydans), this protein is Phosphoribosyl-AMP cyclohydrolase.